Consider the following 904-residue polypeptide: Alanine--tRNA ligase (904 aa).

Residues histidine 584, histidine 588, cysteine 687, and histidine 691 each contribute to the Zn(2+) site.

The protein belongs to the class-II aminoacyl-tRNA synthetase family. The cofactor is Zn(2+).

The protein localises to the cytoplasm. It catalyses the reaction tRNA(Ala) + L-alanine + ATP = L-alanyl-tRNA(Ala) + AMP + diphosphate. Catalyzes the attachment of alanine to tRNA(Ala) in a two-step reaction: alanine is first activated by ATP to form Ala-AMP and then transferred to the acceptor end of tRNA(Ala). Also edits incorrectly charged Ser-tRNA(Ala) and Gly-tRNA(Ala) via its editing domain. This Mycobacterium bovis (strain ATCC BAA-935 / AF2122/97) protein is Alanine--tRNA ligase.